The sequence spans 459 residues: DNA damage-inducible protein F (459 aa).

A run of 12 helical transmembrane segments spans residues 2–22, 29–49, 63–83, 111–131, 154–174, 180–200, 207–227, 265–285, 289–309, 338–358, 373–393, and 416–436; these read PPGV…MAFL, LWHL…LGLV, LGGV…LLFL, LLLA…IIDL, WLSA…LGVQ, VILL…LVMG, GAAL…LLMV, LLQL…SDII, AVLM…AYAV, IVAL…IALL, IWQV…GMFI, and LLTL…VFLA.

This sequence belongs to the multi antimicrobial extrusion (MATE) (TC 2.A.66.1) family.

It is found in the cell inner membrane. This chain is DNA damage-inducible protein F (dinF), found in Escherichia coli (strain K12).